Here is a 463-residue protein sequence, read N- to C-terminus: Formate-nitrite transporter 2 (463 aa).

The Cytoplasmic portion of the chain corresponds to 1–100 (MCSIPPLRLL…VKKTQLRIDR (100 aa)). The helical transmembrane segment at 101 to 121 (LLLQAFMAGIFVAMAGHCCTV) threads the bilayer. The Extracellular portion of the chain corresponds to 122-142 (LAGSYPTDPGDPLAVAKPTQK). A helical membrane pass occupies residues 143-163 (FIYGALFPVAFICIILTGAEL). The Cytoplasmic portion of the chain corresponds to 164 to 189 (FTGNTMTMLICYFQKRVTMLQLGVNW). The helical transmembrane segment at 190-210 (LGSLAGNWLGALFGAYFLSYL) threads the bilayer. Topologically, residues 211–237 (TGALGDEHVRQFLFRTCVNKISYGWGE) are extracellular. Residues 238 to 258 (CFLRGVGCNTFVCLAVWAVIA) form a helical membrane-spanning segment. Residues 259–265 (SENVAGK) are Cytoplasmic-facing. The helical transmembrane segment at 266–286 (VLVMWFPIVAFCVGGYEHIIA) threads the bilayer. Residues 287–305 (NMYTLQAGLMAGAPVAILD) are Extracellular-facing. Residues 306–326 (VIAFNFLPTLLGNIVGGCLLV) traverse the membrane as a helical segment. Over 327 to 463 (GAVYAYNFYP…QTAESVAQQV (137 aa)) the chain is Cytoplasmic. The disordered stretch occupies residues 424–463 (SGNLSTHARLDLPNRPVEPPSDGLEVTPQSQTAESVAQQV). Positions 450-463 (TPQSQTAESVAQQV) are enriched in polar residues.

Belongs to the FNT transporter (TC 1.A.16) family. Homopentamer.

It is found in the cell membrane. It carries out the reaction (S)-lactate(in) + H(+)(in) = (S)-lactate(out) + H(+)(out). It catalyses the reaction formate(in) + H(+)(in) = formate(out) + H(+)(out). The catalysed reaction is pyruvate(out) + H(+)(out) = pyruvate(in) + H(+)(in). The enzyme catalyses acetate(out) + H(+)(out) = acetate(in) + H(+)(in). Its activity is regulated as follows. Inhibited by p-chloromercuribenzene sulfonate (pCMBS). Methyl methanethiosulfonate (MMTS) inhibits L-lactate but not formate transport. Inhibited by the Malaria Box compound MMV007839. Inhibited by BH-296, BH-317, BH-326 and BH-388 compounds. Monocarboxylate-proton symporter; active in acidic-to-neutral pH range. Transports L-lactate and formate. The chain is Formate-nitrite transporter 2 from Toxoplasma gondii (strain ATCC 50611 / Me49).